Consider the following 114-residue polypeptide: T cell receptor alpha variable 24 (114 aa).

A signal peptide spans 1 to 22 (MEKNPLAAPLLILWFHLDCVSS). In terms of domain architecture, Ig-like spans 23–114 (ILNVEQSPQS…EDSATYLCAF (92 aa)). Asparagine 42 is a glycosylation site (N-linked (GlcNAc...) asparagine). A disulfide bridge links cysteine 45 with cysteine 112.

Alpha-beta TR is a heterodimer composed of an alpha and beta chain; disulfide-linked. The alpha-beta TR is associated with the transmembrane signaling CD3 coreceptor proteins to form the TR-CD3 (TcR or TCR). The assembly of alpha-beta TR heterodimers with CD3 occurs in the endoplasmic reticulum where a single alpha-beta TR heterodimer associates with one CD3D-CD3E heterodimer, one CD3G-CD3E heterodimer and one CD247 homodimer forming a stable octameric structure. CD3D-CD3E and CD3G-CD3E heterodimers preferentially associate with TR alpha and TR beta chains, respectively. The association of the CD247 homodimer is the last step of TcR assembly in the endoplasmic reticulum and is required for transport to the cell surface.

It is found in the cell membrane. In terms of biological role, v region of the variable domain of T cell receptor (TR) alpha chain that participates in the antigen recognition. Alpha-beta T cell receptors are antigen specific receptors which are essential to the immune response and are present on the cell surface of T lymphocytes. Recognize peptide-major histocompatibility (MH) (pMH) complexes that are displayed by antigen presenting cells (APC), a prerequisite for efficient T cell adaptive immunity against pathogens. Binding of alpha-beta TR to pMH complex initiates TR-CD3 clustering on the cell surface and intracellular activation of LCK that phosphorylates the ITAM motifs of CD3G, CD3D, CD3E and CD247 enabling the recruitment of ZAP70. In turn ZAP70 phosphorylates LAT, which recruits numerous signaling molecules to form the LAT signalosome. The LAT signalosome propagates signal branching to three major signaling pathways, the calcium, the mitogen-activated protein kinase (MAPK) kinase and the nuclear factor NF-kappa-B (NF-kB) pathways, leading to the mobilization of transcription factors that are critical for gene expression and essential for T cell growth and differentiation. The T cell repertoire is generated in the thymus, by V-(D)-J rearrangement. This repertoire is then shaped by intrathymic selection events to generate a peripheral T cell pool of self-MH restricted, non-autoaggressive T cells. Post-thymic interaction of alpha-beta TR with the pMH complexes shapes TR structural and functional avidity. The chain is T cell receptor alpha variable 24 from Homo sapiens (Human).